Here is a 361-residue protein sequence, read N- to C-terminus: DNA replication and repair protein RecF (361 aa).

30 to 37 serves as a coordination point for ATP; sequence GQNAQGKT.

Belongs to the RecF family.

It localises to the cytoplasm. In terms of biological role, the RecF protein is involved in DNA metabolism; it is required for DNA replication and normal SOS inducibility. RecF binds preferentially to single-stranded, linear DNA. It also seems to bind ATP. In Streptococcus gordonii (strain Challis / ATCC 35105 / BCRC 15272 / CH1 / DL1 / V288), this protein is DNA replication and repair protein RecF.